Reading from the N-terminus, the 389-residue chain is DNA damage checkpoint control protein RAD17 (389 aa).

Residues 358 to 389 are disordered; that stretch reads LAPPSAFPAEETQDPDESYHPAPSNTDIPLFL. A compositionally biased stretch (polar residues) spans 380–389; that stretch reads PSNTDIPLFL.

The protein belongs to the rad1 family. As to quaternary structure, component of the checkpoint clamp complex composed of DDC1, MEC3 and RAD17.

It is found in the nucleus. Component of the checkpoint clamp complex involved in the surveillance mechanism that allows the DNA repair pathways to act to restore the integrity of the DNA prior to DNA synthesis or separation of the replicated chromosomes. The polypeptide is DNA damage checkpoint control protein RAD17 (RAD17) (Eremothecium gossypii (strain ATCC 10895 / CBS 109.51 / FGSC 9923 / NRRL Y-1056) (Yeast)).